A 658-amino-acid chain; its full sequence is Exoribonuclease 2 (658 aa).

The region spanning 189 to 530 (REDLTSLYFT…VNHRLIKQVL (342 aa)) is the RNB domain. Residues 576–658 (AVEFDCEIAD…ETRSIVGNII (83 aa)) enclose the S1 motif domain.

Belongs to the RNR ribonuclease family. RNase II subfamily.

It localises to the cytoplasm. The enzyme catalyses Exonucleolytic cleavage in the 3'- to 5'-direction to yield nucleoside 5'-phosphates.. Its function is as follows. Involved in mRNA degradation. Hydrolyzes single-stranded polyribonucleotides processively in the 3' to 5' direction. In Actinobacillus pleuropneumoniae serotype 5b (strain L20), this protein is Exoribonuclease 2.